We begin with the raw amino-acid sequence, 277 residues long: MALKKFNPTTPGQRQLVMVDRSALYKGKPVKSLTEGKHSAGGRNNTGRIVVRFRGGGHKQTYRIVDFKRTKVDMPAVVERLEYDPNRTAFIALIKYTDGTQAYILAPQRLAVGDTVLAGAYVDVKPGNVMPLGNMPIGTIVHNVELKIGKGGQIARSAGTYAQLVGRDHDYVIVRLNSGEQRLVHGRCTATIGAVSNPDHMNISIGKAGRSRWLGRKPHNRGVTMNPVDHPHGGGEGRTSGGRHPVTPWGKPTKGKKTRSNKSTNKFILISRHKRKK.

A disordered region spans residues 222–277; the sequence is GVTMNPVDHPHGGGEGRTSGGRHPVTPWGKPTKGKKTRSNKSTNKFILISRHKRKK.

The protein belongs to the universal ribosomal protein uL2 family. Part of the 50S ribosomal subunit. Forms a bridge to the 30S subunit in the 70S ribosome.

In terms of biological role, one of the primary rRNA binding proteins. Required for association of the 30S and 50S subunits to form the 70S ribosome, for tRNA binding and peptide bond formation. It has been suggested to have peptidyltransferase activity; this is somewhat controversial. Makes several contacts with the 16S rRNA in the 70S ribosome. This chain is Large ribosomal subunit protein uL2, found in Rhodopseudomonas palustris (strain BisB18).